We begin with the raw amino-acid sequence, 473 residues long: Glutamate--tRNA ligase 2 (473 aa).

Residues 11–21 (PSPTGYLHIGG) carry the 'HIGH' region motif. Positions 113-133 (KARAEGRPPRYDGRWRDRDPS) are enriched in basic and acidic residues. A disordered region spans residues 113–136 (KARAEGRPPRYDGRWRDRDPSEAP). The 'KMSKS' region motif lies at 240–244 (KLSKR). ATP is bound at residue lysine 243.

This sequence belongs to the class-I aminoacyl-tRNA synthetase family. Glutamate--tRNA ligase type 1 subfamily. As to quaternary structure, monomer.

It is found in the cytoplasm. It catalyses the reaction tRNA(Glu) + L-glutamate + ATP = L-glutamyl-tRNA(Glu) + AMP + diphosphate. Functionally, catalyzes the attachment of glutamate to tRNA(Glu) in a two-step reaction: glutamate is first activated by ATP to form Glu-AMP and then transferred to the acceptor end of tRNA(Glu). The chain is Glutamate--tRNA ligase 2 from Brucella canis (strain ATCC 23365 / NCTC 10854 / RM-666).